The primary structure comprises 268 residues: Small ribosomal subunit protein eS1 (268 aa).

Residues 1-21 (MAVGKNKGLSKGGKKGGKKKV) are disordered.

The protein belongs to the eukaryotic ribosomal protein eS1 family. As to quaternary structure, component of the small ribosomal subunit. Mature ribosomes consist of a small (40S) and a large (60S) subunit. The 40S subunit contains about 33 different proteins and 1 molecule of RNA (18S). The 60S subunit contains about 49 different proteins and 3 molecules of RNA (28S, 5.8S and 5S).

The protein resides in the cytoplasm. Functionally, essential for oogenesis; required for late follicle cell development. The chain is Small ribosomal subunit protein eS1 from Drosophila persimilis (Fruit fly).